A 250-amino-acid polypeptide reads, in one-letter code: 5-oxoprolinase subunit A (250 aa).

Belongs to the LamB/PxpA family. Forms a complex composed of PxpA, PxpB and PxpC.

The enzyme catalyses 5-oxo-L-proline + ATP + 2 H2O = L-glutamate + ADP + phosphate + H(+). Catalyzes the cleavage of 5-oxoproline to form L-glutamate coupled to the hydrolysis of ATP to ADP and inorganic phosphate. The polypeptide is 5-oxoprolinase subunit A (Thermus thermophilus (strain ATCC BAA-163 / DSM 7039 / HB27)).